The chain runs to 308 residues: Rhamnose-binding lectin (308 aa).

Positions 1-23 are cleaved as a signal peptide; it reads MMLILKLSLLSLLIATPGLLVSG. SUEL-type lectin domains follow at residues 27–115, 123–213, and 218–308; these read ITCY…SFDC, ICEH…YICT, and VCEG…YACV. Asparagine 110 is a glycosylation site (N-linked (GlcNAc...) asparagine).

As to quaternary structure, homotrimer. As to expression, expressed in eggs, but not in liver.

The protein localises to the secreted. Functionally, lectin that binds L-rhamnose. Also binds monosaccharides possessing steric similarity to the hydroxyl group orientation at C2 and C4 of the pyranose ring structure of L-rhamnose, such as L-mannose and L-lyxose. The sequence is that of Rhamnose-binding lectin from Silurus asotus (Amur catfish).